A 175-amino-acid polypeptide reads, in one-letter code: Crossover junction endodeoxyribonuclease RuvC (175 aa).

Residues Asp16, Glu76, and Asp148 contribute to the active site. Asp16, Glu76, and Asp148 together coordinate Mg(2+).

This sequence belongs to the RuvC family. Homodimer which binds Holliday junction (HJ) DNA. The HJ becomes 2-fold symmetrical on binding to RuvC with unstacked arms; it has a different conformation from HJ DNA in complex with RuvA. In the full resolvosome a probable DNA-RuvA(4)-RuvB(12)-RuvC(2) complex forms which resolves the HJ. Requires Mg(2+) as cofactor.

It is found in the cytoplasm. It catalyses the reaction Endonucleolytic cleavage at a junction such as a reciprocal single-stranded crossover between two homologous DNA duplexes (Holliday junction).. Functionally, the RuvA-RuvB-RuvC complex processes Holliday junction (HJ) DNA during genetic recombination and DNA repair. Endonuclease that resolves HJ intermediates. Cleaves cruciform DNA by making single-stranded nicks across the HJ at symmetrical positions within the homologous arms, yielding a 5'-phosphate and a 3'-hydroxyl group; requires a central core of homology in the junction. The consensus cleavage sequence is 5'-(A/T)TT(C/G)-3'. Cleavage occurs on the 3'-side of the TT dinucleotide at the point of strand exchange. HJ branch migration catalyzed by RuvA-RuvB allows RuvC to scan DNA until it finds its consensus sequence, where it cleaves and resolves the cruciform DNA. The chain is Crossover junction endodeoxyribonuclease RuvC from Rhodopseudomonas palustris (strain BisB18).